Reading from the N-terminus, the 539-residue chain is Chaperonin GroEL (539 aa).

ATP-binding positions include 29-32, 86-90, Gly413, 479-481, and Asp495; these read TLGP, DGTTT, and DAL.

Belongs to the chaperonin (HSP60) family. In terms of assembly, forms a cylinder of 14 subunits composed of two heptameric rings stacked back-to-back. Interacts with the co-chaperonin GroES.

It is found in the cytoplasm. The catalysed reaction is ATP + H2O + a folded polypeptide = ADP + phosphate + an unfolded polypeptide.. Its function is as follows. Together with its co-chaperonin GroES, plays an essential role in assisting protein folding. The GroEL-GroES system forms a nano-cage that allows encapsulation of the non-native substrate proteins and provides a physical environment optimized to promote and accelerate protein folding. The sequence is that of Chaperonin GroEL from Thermosipho africanus (strain TCF52B).